The sequence spans 293 residues: Ribonuclease HIII (293 aa).

The RNase H type-2 domain maps to 78 to 293 (LPLIGTDEVG…TEKAKKRLER (216 aa)). Residues aspartate 84, glutamate 85, and aspartate 187 each coordinate a divalent metal cation.

The protein belongs to the RNase HII family. RnhC subfamily. The cofactor is Mn(2+). Mg(2+) serves as cofactor.

Its subcellular location is the cytoplasm. The enzyme catalyses Endonucleolytic cleavage to 5'-phosphomonoester.. Endonuclease that specifically degrades the RNA of RNA-DNA hybrids. The polypeptide is Ribonuclease HIII (Streptococcus pneumoniae (strain 70585)).